Reading from the N-terminus, the 351-residue chain is D-alanine--D-alanine ligase (351 aa).

One can recognise an ATP-grasp domain in the interval 135–343 (NQIFLQSGQK…MEEVFADLIE (209 aa)). 167–222 (LMSLGFPQFLKPVEGGSSVSTYKITNQEQLSRQLALIFESDSKVMSQSFLAGTEVS) serves as a coordination point for ATP. Mg(2+) is bound by residues aspartate 298, glutamate 310, and asparagine 312.

This sequence belongs to the D-alanine--D-alanine ligase family. Mg(2+) serves as cofactor. Mn(2+) is required as a cofactor.

Its subcellular location is the cytoplasm. The enzyme catalyses 2 D-alanine + ATP = D-alanyl-D-alanine + ADP + phosphate + H(+). Its pathway is cell wall biogenesis; peptidoglycan biosynthesis. Functionally, cell wall formation. The polypeptide is D-alanine--D-alanine ligase (Leptospira borgpetersenii serovar Hardjo-bovis (strain JB197)).